The primary structure comprises 158 residues: Dysbindin domain-containing protein 1 (158 aa).

The interval methionine 1–methionine 38 is disordered. Serine 95 and serine 119 each carry phosphoserine. The segment at aspartate 96 to aspartate 158 is disordered. Positions threonine 125–arginine 141 are enriched in basic and acidic residues.

This sequence belongs to the dysbindin family.

This Bos taurus (Bovine) protein is Dysbindin domain-containing protein 1 (DBNDD1).